A 57-amino-acid polypeptide reads, in one-letter code: Large ribosomal subunit protein bL32 (57 aa).

The protein belongs to the bacterial ribosomal protein bL32 family.

This chain is Large ribosomal subunit protein bL32, found in Geobacillus kaustophilus (strain HTA426).